Consider the following 352-residue polypeptide: 4-hydroxy-3-methylbut-2-en-1-yl diphosphate synthase (flavodoxin) (352 aa).

[4Fe-4S] cluster-binding residues include Cys262, Cys265, Cys297, and Glu304.

It belongs to the IspG family. [4Fe-4S] cluster serves as cofactor.

The enzyme catalyses (2E)-4-hydroxy-3-methylbut-2-enyl diphosphate + oxidized [flavodoxin] + H2O + 2 H(+) = 2-C-methyl-D-erythritol 2,4-cyclic diphosphate + reduced [flavodoxin]. It functions in the pathway isoprenoid biosynthesis; isopentenyl diphosphate biosynthesis via DXP pathway; isopentenyl diphosphate from 1-deoxy-D-xylulose 5-phosphate: step 5/6. Its function is as follows. Converts 2C-methyl-D-erythritol 2,4-cyclodiphosphate (ME-2,4cPP) into 1-hydroxy-2-methyl-2-(E)-butenyl 4-diphosphate. The protein is 4-hydroxy-3-methylbut-2-en-1-yl diphosphate synthase (flavodoxin) of Nitratiruptor sp. (strain SB155-2).